Here is a 272-residue protein sequence, read N- to C-terminus: Dermonecrotic toxin LvSicTox-alphaIC1bi (272 aa).

The active site involves His5. The Mg(2+) site is built by Glu25 and Asp27. The active-site Nucleophile is His41. 2 disulfide bridges follow: Cys45–Cys51 and Cys47–Cys189. Residue Asp84 coordinates Mg(2+).

It belongs to the arthropod phospholipase D family. Class II subfamily. Requires Mg(2+) as cofactor. In terms of tissue distribution, expressed by the venom gland.

The protein resides in the secreted. The catalysed reaction is an N-(acyl)-sphingosylphosphocholine = an N-(acyl)-sphingosyl-1,3-cyclic phosphate + choline. It catalyses the reaction an N-(acyl)-sphingosylphosphoethanolamine = an N-(acyl)-sphingosyl-1,3-cyclic phosphate + ethanolamine. It carries out the reaction a 1-acyl-sn-glycero-3-phosphocholine = a 1-acyl-sn-glycero-2,3-cyclic phosphate + choline. The enzyme catalyses a 1-acyl-sn-glycero-3-phosphoethanolamine = a 1-acyl-sn-glycero-2,3-cyclic phosphate + ethanolamine. Dermonecrotic toxins cleave the phosphodiester linkage between the phosphate and headgroup of certain phospholipids (sphingolipid and lysolipid substrates), forming an alcohol (often choline) and a cyclic phosphate. This toxin acts on sphingomyelin (SM). It may also act on ceramide phosphoethanolamine (CPE), lysophosphatidylcholine (LPC) and lysophosphatidylethanolamine (LPE), but not on lysophosphatidylserine (LPS), and lysophosphatidylglycerol (LPG). It acts by transphosphatidylation, releasing exclusively cyclic phosphate products as second products. Induces dermonecrosis, hemolysis, increased vascular permeability, edema, inflammatory response, and platelet aggregation. The protein is Dermonecrotic toxin LvSicTox-alphaIC1bi of Loxosceles variegata (Recluse spider).